The primary structure comprises 202 residues: Transcription factor IBH1 (202 aa).

Over residues 1 to 16 the composition is skewed to pro residues; that stretch reads MDAKRTPPPPTPPNPN. The disordered stretch occupies residues 1–33; sequence MDAKRTPPPPTPPNPNPSVIGSGAAADGGGFGR. One can recognise a bHLH domain in the interval 136–185; it reads TSAAARAVPPPPRQQGEPPRAEALRRLVPGGAGMEYSSLLEETADYLRSL.

It belongs to the bHLH protein family. In terms of assembly, interacts with ILI1. Binds to ILI5/BUL1 and BC1. Interacts with BCL1 and BCL2. In terms of tissue distribution, highly expressed in roots and at lower levels in leaf blades, leaf sheaths, lamina joint, stems and panicles.

Atypical and probable non DNA-binding bHLH transcription factor that acts as a negative regulator of cell elongation and plant development. Binds the transcription factor ILI1 and forms a heterodimer of antagonistic bHLH transcription factors that function downstream of BZR1 to mediate brassinosteroid regulation of cell elongation and lamina inclination. The chain is Transcription factor IBH1 from Oryza sativa subsp. japonica (Rice).